Reading from the N-terminus, the 270-residue chain is MTAPIRIALMGCQGRMGKALLEAIRANEQVTLGTALERPGSTVIGLDVGDLNGLGAMNVLIADDLEKVKDQFDVIIDFTRPEVTLKNLAFAVANNKRIVIGTTGFDDAGKAAINEAAKKIGIVFASNFSVGVNLVFKLLEQAAKVMGDYTDIEIIEGHHRHKVDAPSGTALSMGEVVAKTLGRDLKQCAVYGREGITGERDRNTIGFATIRAGDLVGEHTVMFADIGERVEITHKASSRLTFANGAVRAANWLKDQPCGLFDMQDVLNLK.

Residues 11–16 (GCQGRM) and Glu-37 each bind NAD(+). Arg-38 contributes to the NADP(+) binding site. Residues 101-103 (GTT) and 125-128 (ASNF) contribute to the NAD(+) site. His-158 functions as the Proton donor/acceptor in the catalytic mechanism. His-159 is a binding site for (S)-2,3,4,5-tetrahydrodipicolinate. Lys-162 serves as the catalytic Proton donor. 168-169 (GT) provides a ligand contact to (S)-2,3,4,5-tetrahydrodipicolinate.

The protein belongs to the DapB family.

The protein localises to the cytoplasm. It carries out the reaction (S)-2,3,4,5-tetrahydrodipicolinate + NAD(+) + H2O = (2S,4S)-4-hydroxy-2,3,4,5-tetrahydrodipicolinate + NADH + H(+). The catalysed reaction is (S)-2,3,4,5-tetrahydrodipicolinate + NADP(+) + H2O = (2S,4S)-4-hydroxy-2,3,4,5-tetrahydrodipicolinate + NADPH + H(+). Its pathway is amino-acid biosynthesis; L-lysine biosynthesis via DAP pathway; (S)-tetrahydrodipicolinate from L-aspartate: step 4/4. Functionally, catalyzes the conversion of 4-hydroxy-tetrahydrodipicolinate (HTPA) to tetrahydrodipicolinate. In Tolumonas auensis (strain DSM 9187 / NBRC 110442 / TA 4), this protein is 4-hydroxy-tetrahydrodipicolinate reductase.